Consider the following 97-residue polypeptide: Aspartyl/glutamyl-tRNA(Asn/Gln) amidotransferase subunit C (97 aa).

Belongs to the GatC family. In terms of assembly, heterotrimer of A, B and C subunits.

It catalyses the reaction L-glutamyl-tRNA(Gln) + L-glutamine + ATP + H2O = L-glutaminyl-tRNA(Gln) + L-glutamate + ADP + phosphate + H(+). The catalysed reaction is L-aspartyl-tRNA(Asn) + L-glutamine + ATP + H2O = L-asparaginyl-tRNA(Asn) + L-glutamate + ADP + phosphate + 2 H(+). Functionally, allows the formation of correctly charged Asn-tRNA(Asn) or Gln-tRNA(Gln) through the transamidation of misacylated Asp-tRNA(Asn) or Glu-tRNA(Gln) in organisms which lack either or both of asparaginyl-tRNA or glutaminyl-tRNA synthetases. The reaction takes place in the presence of glutamine and ATP through an activated phospho-Asp-tRNA(Asn) or phospho-Glu-tRNA(Gln). The protein is Aspartyl/glutamyl-tRNA(Asn/Gln) amidotransferase subunit C of Synechococcus sp. (strain CC9902).